The chain runs to 27 residues: Dermaseptin-S4 (27 aa).

The protein belongs to the frog skin active peptide (FSAP) family. Dermaseptin subfamily. As to quaternary structure, monomer and oligomer. Forms aggregates in aqueous environments. As to expression, expressed by the skin glands.

The protein resides in the secreted. Functionally, potent antimicrobial peptide with activity against bacteria and protozoa. Also has activity against fungi. Also shows activity against enveloped herpes simplex virus type 1. Probably acts by disturbing membrane functions with its amphipathic structure. Binds to healthy erythrocytes (this binding is receptor independent), and has strong hemolytic activity. Does not bind to P.falciparum infected erythrocytes, but accumulates within the parasite. Kills the parasite, and only at high concentrations has a hemolytic activity on the host cell. In vitro, shows high spermicidal activities. In Phyllomedusa sauvagei (Sauvage's leaf frog), this protein is Dermaseptin-S4.